Here is a 60-residue protein sequence, read N- to C-terminus: Myrmicitoxin(1)-Pr4a (60 aa).

The signal sequence occupies residues 1–23 (MKAIIFLFAVLTVVAIIIPIISG). Positions 24–33 (EPNAGPHAAS) are excised as a propeptide. Gln-59 is subject to Glutamine amide.

It belongs to the formicidae venom clade 2 family. As to expression, expressed by the venom gland.

It is found in the secreted. In terms of biological role, toxin that causes a rapid and irreversible paralysis when intrathoracically injected into insects (blowflies). Does not cause spontaneous nocifensive behaviors by intraplantar injection in mice. This chain is Myrmicitoxin(1)-Pr4a, found in Pogonomyrmex rugosus (Desert harvester ant).